The chain runs to 497 residues: Probable cytosol aminopeptidase (497 aa).

Mn(2+) contacts are provided by Lys-263 and Asp-268. Residue Lys-275 is part of the active site. Mn(2+) is bound by residues Asp-286, Asp-345, and Glu-347. Residue Arg-349 is part of the active site.

It belongs to the peptidase M17 family. Requires Mn(2+) as cofactor.

Its subcellular location is the cytoplasm. The catalysed reaction is Release of an N-terminal amino acid, Xaa-|-Yaa-, in which Xaa is preferably Leu, but may be other amino acids including Pro although not Arg or Lys, and Yaa may be Pro. Amino acid amides and methyl esters are also readily hydrolyzed, but rates on arylamides are exceedingly low.. The enzyme catalyses Release of an N-terminal amino acid, preferentially leucine, but not glutamic or aspartic acids.. In terms of biological role, presumably involved in the processing and regular turnover of intracellular proteins. Catalyzes the removal of unsubstituted N-terminal amino acids from various peptides. The chain is Probable cytosol aminopeptidase from Sinorhizobium fredii (strain NBRC 101917 / NGR234).